Consider the following 559-residue polypeptide: MGFSFSSNRFGYLTVTFLLVISCLLLGFFTNPVDSSALRPKSEHDCSALKHFHDYKSKCAYLKSIDPCASQGFFDYLSFLYCNFEGFPILGQFLLFLWLLLLFYLLGHTASEYFCSSLESLSKLLNLSPTVAGVTLLSLGNGAPDLFASLVSFMGESKGTYDVGLNTVVGGSGFVTCVVVGIISISLHKRRVRIERAAFIRDICFFCAAIGSLALILVYGKINFWGALGFCSLYAVYVAFVVLSWRFGGDQGAESDLESIHKRGSLSEPILQRDGLEEIEDGVVNGEHQIVDDDDDHQRYYYWKRLVIWAITLPLNLPRILTIPVVSEDKWSKPLAVASVTFAPVLLSFLWNWKRKPTSFEAGVVYLIGCLIGIALGFIAGATTKKLTPPKKWLLPWLAGGFVMSMTWSYISAQELVALLTSLGYIFGVSPSILGLTVLAWGNSIGDLITNLTMALHDGNEGAQVAVSGCYAGPIFNTLFALGISLVGCAWEAYPLSIVIKTDPRLLESLGFLVAGLVWSFLVLFSNRMRLGGVMGIGLLVIYLASLSLRIMQTVGDAH.

Transmembrane regions (helical) follow at residues 10-30, 86-106, 131-151, 167-187, 203-223, 224-244, 331-351, 362-382, 393-413, 416-436, 480-500, 506-526, and 531-551; these read FGYL…GFFT, GFPI…FYLL, VAGV…ASLV, TVVG…SISL, ICFF…GKIN, FWGA…VVLS, WSKP…SFLW, AGVV…IAGA, WLLP…YISA, LVAL…ILGL, FALG…SIVI, LLES…VLFS, and LGGV…SLRI.

The protein belongs to the Ca(2+):cation antiporter (CaCA) (TC 2.A.19) family. Cation/calcium exchanger (CCX) subfamily.

Its subcellular location is the membrane. Its function is as follows. Membrane-localized H(+)-dependent K(+) and Na(+) transporter. This Arabidopsis thaliana (Mouse-ear cress) protein is Cation/calcium exchanger 2 (CCX2).